Consider the following 506-residue polypeptide: Methylthioalkylmalate synthase 1, chloroplastic (506 aa).

A chloroplast-targeting transit peptide spans 1-49; sequence MASSLLTSSVMIPTTGSTVVGRSVLPFQSSLHSLRLTHSYKNPALFISC. Residues 85 to 359 enclose the Pyruvate carboxyltransferase domain; that stretch reads VRVFDTTLRD…YTKIDTRQIM (275 aa). The residue at position 98 (S98) is a Phosphoserine.

It belongs to the alpha-IPM synthase/homocitrate synthase family. Monomer. Mn(2+) serves as cofactor. Highly expressed in leaves, flowers, roots and siliques. Not detected in flowers in PubMed:12432038.

Its subcellular location is the plastid. It is found in the chloroplast. The enzyme catalyses an omega-(methylsulfanyl)-2-oxoalkanoate + acetyl-CoA + H2O = a 2-(omega-methylsulfanyl)alkylmalate + CoA + H(+). Its activity is regulated as follows. 1 mM DTT required for activity. Activated by ATP and inhibited by iodoacetamide. Functionally, determines the side chain length of aliphatic glucosinolate structures. Catalyzes exclusively the condensation reactions of both the first and second methionine carbon chain elongation. The chain is Methylthioalkylmalate synthase 1, chloroplastic (MAM1) from Arabidopsis thaliana (Mouse-ear cress).